We begin with the raw amino-acid sequence, 161 residues long: 3-isopropylmalate dehydratase small subunit (161 aa).

This sequence belongs to the LeuD family. LeuD type 2 subfamily. Heterodimer of LeuC and LeuD.

The catalysed reaction is (2R,3S)-3-isopropylmalate = (2S)-2-isopropylmalate. It functions in the pathway amino-acid biosynthesis; L-leucine biosynthesis; L-leucine from 3-methyl-2-oxobutanoate: step 2/4. In terms of biological role, catalyzes the isomerization between 2-isopropylmalate and 3-isopropylmalate, via the formation of 2-isopropylmaleate. The protein is 3-isopropylmalate dehydratase small subunit of Pyrobaculum calidifontis (strain DSM 21063 / JCM 11548 / VA1).